The following is a 172-amino-acid chain: Type IV secretion system putative outer membrane lipoprotein BMEII0036 (172 aa).

An N-terminal signal peptide occupies residues 1–15; it reads MRTLVMVACAVSLAA. Residue cysteine 16 is the site of N-palmitoyl cysteine attachment. A lipid anchor (S-diacylglycerol cysteine) is attached at cysteine 16. Residues 58–172 form the OmpA-like domain; it reads WPARPPKQTV…RRVDIEILRK (115 aa).

It is found in the cell outer membrane. This Brucella melitensis biotype 1 (strain ATCC 23456 / CCUG 17765 / NCTC 10094 / 16M) protein is Type IV secretion system putative outer membrane lipoprotein BMEII0036.